Consider the following 397-residue polypeptide: ATP-dependent RNA helicase RhlB (397 aa).

Residues 8-36 carry the Q motif motif; that stretch reads TRFHDFNLAPELMHAIQDLGFPYCTPIQA. In terms of domain architecture, Helicase ATP-binding spans 39-219; that stretch reads LGFTLKGKDA…KQWTTDPSIV (181 aa). 52–59 lines the ATP pocket; it reads AQTGTGKT. Positions 165-168 match the DEAD box motif; the sequence is DEAD. In terms of domain architecture, Helicase C-terminal spans 242-392; it reads DKYKLLYNLV…TPPTHLLRAV (151 aa).

This sequence belongs to the DEAD box helicase family. RhlB subfamily. As to quaternary structure, component of the RNA degradosome, which is a multiprotein complex involved in RNA processing and mRNA degradation.

The protein resides in the cytoplasm. It carries out the reaction ATP + H2O = ADP + phosphate + H(+). In terms of biological role, DEAD-box RNA helicase involved in RNA degradation. Has RNA-dependent ATPase activity and unwinds double-stranded RNA. This Pseudomonas syringae pv. tomato (strain ATCC BAA-871 / DC3000) protein is ATP-dependent RNA helicase RhlB.